The following is a 125-amino-acid chain: Larval cuticle protein LCP-14 (125 aa).

A signal peptide spans 1–16 (MKSFIVALCVVGCVLA). In terms of domain architecture, Chitin-binding type R&amp;R spans 33–102 (EGSYNYAFES…PQADFLPTPP (70 aa)).

Component of the cuticle of the larva of tobacco hornworm. In Manduca sexta (Tobacco hawkmoth), this protein is Larval cuticle protein LCP-14 (LCP-14).